Consider the following 218-residue polypeptide: Small ribosomal subunit protein uS3c (218 aa).

The KH type-2 domain occupies Val47 to Ala118.

It belongs to the universal ribosomal protein uS3 family. In terms of assembly, part of the 30S ribosomal subunit.

It is found in the plastid. The protein localises to the chloroplast. In Solanum bulbocastanum (Wild potato), this protein is Small ribosomal subunit protein uS3c (rps3).